A 146-amino-acid chain; its full sequence is Thyroid hormone-inducible hepatic protein (146 aa).

The interval lysine 83–serine 104 is disordered. Residues glutamate 94–serine 104 show a composition bias toward acidic residues.

It belongs to the SPOT14 family. Homodimer. Heterodimer with MID1IP1. Interacts with THRB and PLAGL1. In terms of tissue distribution, mainly expressed in tissues that synthesize triglycerides.

The protein resides in the nucleus. It localises to the cytoplasm. Functionally, plays a role in the regulation of lipogenesis, especially in lactating mammary gland. Important for the biosynthesis of triglycerides with medium-length fatty acid chains. May modulate lipogenesis by interacting with MID1IP1 and preventing its interaction with ACACA. May function as transcriptional coactivator. May modulate the transcription factor activity of THRB. The sequence is that of Thyroid hormone-inducible hepatic protein (THRSP) from Homo sapiens (Human).